Consider the following 612-residue polypeptide: Coagulation factor XII (612 aa).

Positions 1–19 are cleaved as a signal peptide; that stretch reads MRALLLLGALLVSLESTVS. Residues 42–90 form the Fibronectin type-II domain; that stretch reads VTGEPCHFPFQYHRQLHHKCIHRGRPGPRPWCATTPNFEKDQRWAYCLE. 20 cysteine pairs are disulfide-bonded: Cys47-Cys73, Cys61-Cys88, Cys98-Cys110, Cys104-Cys119, Cys121-Cys130, Cys135-Cys163, Cys161-Cys170, Cys178-Cys189, Cys183-Cys198, Cys200-Cys209, Cys217-Cys306, Cys240-Cys288, Cys268-Cys301, Cys355-Cys482, Cys393-Cys409, Cys401-Cys471, Cys432-Cys435, Cys498-Cys566, Cys529-Cys545, and Cys556-Cys587. An EGF-like 1 domain is found at 94-131; it reads VKDHCSKHNPCQKGGTCVNMPDGPRCICADHFTGKHCQ. The O-linked (Fuc) threonine glycan is linked to Thr109. Residues 133–173 form the Fibronectin type-I domain; the sequence is EKCFEPQFFRFFHENEIWHRLEPAGVVKCQCKGPNAQCKPL. Residues 174–210 form the EGF-like 2 domain; the sequence is ASQVCRTNPCLNGGSCLQAEGHRLCRCAPSFAGRLCD. Residues 217–306 form the Kringle domain; it reads CYDDRDRGLS…SWNYCRLAPC (90 aa). Asn251 and Asn282 each carry an N-linked (GlcNAc...) asparagine glycan. Positions 369–611 constitute a Peptidase S1 domain; the sequence is VVGGLVALPG…YLAWIREHTA (243 aa). His408 acts as the Charge relay system in catalysis. A glycan (N-linked (GlcNAc...) asparagine) is linked at Asn429. The Charge relay system role is filled by Asp457. Ser560 serves as the catalytic Charge relay system.

It belongs to the peptidase S1 family. In terms of assembly, interacts with HRG; the interaction, which is enhanced in the presence of zinc ions and inhibited by heparin-binding, inhibits factor XII autoactivation and contact-initiated coagulation. O- and N-glycosylated.

The protein resides in the secreted. It catalyses the reaction Selective cleavage of Arg-|-Ile bonds in factor VII to form factor VIIa and factor XI to form factor XIa.. Its activity is regulated as follows. Activity is promoted in the presence of negatively charged surfaces. Its function is as follows. Factor XII is a serum glycoprotein that participates in the initiation of blood coagulation, fibrinolysis, and the generation of bradykinin and angiotensin. Prekallikrein is cleaved by factor XII to form kallikrein, which then cleaves factor XII first to alpha-factor XIIa and then to beta-factor XIIa. Alpha-factor XIIa activates factor XI to factor XIa. The chain is Coagulation factor XII (F12) from Bos taurus (Bovine).